The chain runs to 685 residues: Methionine--tRNA ligase (685 aa).

The 'HIGH' region signature appears at proline 15–histidine 25. 4 residues coordinate Zn(2+): cysteine 146, cysteine 149, cysteine 159, and cysteine 162. A 'KMSKS' region motif is present at residues lysine 331 to serine 335. Lysine 334 is an ATP binding site. The tRNA-binding domain maps to aspartate 583–lysine 685.

It belongs to the class-I aminoacyl-tRNA synthetase family. MetG type 1 subfamily. In terms of assembly, homodimer. Zn(2+) is required as a cofactor.

It is found in the cytoplasm. The catalysed reaction is tRNA(Met) + L-methionine + ATP = L-methionyl-tRNA(Met) + AMP + diphosphate. Functionally, is required not only for elongation of protein synthesis but also for the initiation of all mRNA translation through initiator tRNA(fMet) aminoacylation. This chain is Methionine--tRNA ligase, found in Actinobacillus succinogenes (strain ATCC 55618 / DSM 22257 / CCUG 43843 / 130Z).